The following is a 314-amino-acid chain: Methylglutaconyl-CoA hydratase, mitochondrial (314 aa).

The N-terminal 42 residues, 1–42 (MAAAAPGALGALRTGRVRLVAACCARLGPAAWARGTAPRRGY), are a transit peptide targeting the mitochondrion. N6-acetyllysine; alternate is present on K75. K75 is modified (N6-succinyllysine; alternate). Residues 80–94 (KNLLKMLSKAVDALK) form an RNA-binding region. K84 bears the N6-succinyllysine mark. K88 and K119 each carry N6-acetyllysine; alternate. N6-succinyllysine; alternate is present on residues K88 and K119. 2 positions are modified to N6-succinyllysine: K123 and K135. K179 and K186 each carry N6-acetyllysine; alternate. K179 and K186 each carry N6-succinyllysine; alternate. Position 304 is an N6-succinyllysine (K304).

It belongs to the enoyl-CoA hydratase/isomerase family. In terms of assembly, homohexamer. As to expression, detected in heart, brain, liver, spleen, skeletal muscle and kidney. Expressed in brain, kidney, liver and spleen tissue (at protein level).

The protein localises to the mitochondrion. It carries out the reaction (3S)-3-hydroxy-3-methylglutaryl-CoA = 3-methyl-(2E)-glutaconyl-CoA + H2O. The enzyme catalyses (3S)-citramalyl-CoA = itaconyl-CoA + H2O. It catalyses the reaction 3-hydroxyisovaleryl-CoA = 3-methylbut-2-enoyl-CoA + H2O. The catalysed reaction is (S)-3-hydroxyglutaryl-CoA = (2E)-glutaconyl-CoA + H2O. It participates in amino-acid degradation; L-leucine degradation; (S)-3-hydroxy-3-methylglutaryl-CoA from 3-isovaleryl-CoA: step 3/3. Its function is as follows. Catalyzes the fifth step in the leucine degradation pathway, the reversible hydration of 3-methylglutaconyl-CoA (3-MG-CoA) to 3-hydroxy-3-methylglutaryl-CoA (HMG-CoA). Can catalyze the reverse reaction but at a much lower rate in vitro. HMG-CoA is then quickly degraded by another enzyme (such as HMG-CoA lyase) to give acetyl-CoA and acetoacetate. Uses other substrates such as (2E)-glutaconyl-CoA efficiently in vitro, and to a lesser extent 3-methylcrotonyl-CoA (3-methyl-(2E)-butenoyl-CoA), crotonyl-CoA ((2E)-butenoyl-CoA) and 3-hydroxybutanoyl-CoA (the missing carboxylate reduces affinity to the active site). Originally it was identified as an RNA-binding protein as it binds to AU-rich elements (AREs) in vitro. AREs direct rapid RNA degradation and mRNA deadenylation. Might have itaconyl-CoA hydratase activity, converting itaconyl-CoA into citramalyl-CoA in the C5-dicarboxylate catabolism pathway. The C5-dicarboxylate catabolism pathway is required to detoxify itaconate, an antimicrobial metabolite and immunomodulator produced by macrophages during certain infections, that can act as a vitamin B12-poisoning metabolite. This is Methylglutaconyl-CoA hydratase, mitochondrial (Auh) from Mus musculus (Mouse).